The primary structure comprises 237 residues: Ribonuclease 3 (237 aa).

The region spanning 6-133 (LIEVEKLIGI…VIAAVYLDKG (128 aa)) is the RNase III domain. Glutamate 46 is a binding site for Mg(2+). The active site involves aspartate 50. Mg(2+) is bound by residues aspartate 119 and glutamate 122. Glutamate 122 is an active-site residue. Residues 160 to 229 (DFKTRLQEVL…AKAALQRLGE (70 aa)) form the DRBM domain.

Belongs to the ribonuclease III family. In terms of assembly, homodimer. Requires Mg(2+) as cofactor.

The protein resides in the cytoplasm. It catalyses the reaction Endonucleolytic cleavage to 5'-phosphomonoester.. Digests double-stranded RNA. Involved in the processing of primary rRNA transcript to yield the immediate precursors to the large and small rRNAs (23S and 16S). Processes some mRNAs, and tRNAs when they are encoded in the rRNA operon. Processes pre-crRNA and tracrRNA of type II CRISPR loci if present in the organism. This is Ribonuclease 3 from Clostridium perfringens (strain 13 / Type A).